Reading from the N-terminus, the 398-residue chain is Cathepsin E (398 aa).

The signal sequence occupies residues 1-21; sequence MKPLFVLLLLLLLLDLAQAQG. A propeptide spans 22-58 (activation peptide); it reads VLHRVPLRRHQSLRKKLRAQGQLSDFWRSHNLDMIEF. A Peptidase A1 domain is found at 80–394; the sequence is YFGTVSIGSP…DRGNNQVGLA (315 aa). The N-linked (GlcNAc...) asparagine glycan is linked to Asn-92. Asp-98 is a catalytic residue. Disulfide bonds link Cys-111–Cys-116 and Cys-274–Cys-278. Asp-283 is an active-site residue.

It belongs to the peptidase A1 family. Homodimer; disulfide-linked. Glycosylated. The nature of the carbohydrate chain varies between cell types. In brain microglia, the proenzyme contains a high mannose-type oligosaccharide, while the mature enzyme contains a complex-type oligosaccharide. In stomach and spleen, the mature enzyme contains a high mannose-type oligosaccharide. In erythrocyte membranes, the mature enzyme contains a complex-type oligosaccharide. Expressed abundantly in lymphocytes and macrophages of the thymus and spleen, and in the M cells of the intestine. In the brain, expression is limited to reactive microglial cells, the large pyrimidial neurons in the cerebral cortex, the CA1 and CA3 pyrimidial neurons of the hippocampus, the large neurons of the neostriatum, and the Purkinje neurons of the cerebellum.

It localises to the endosome. It carries out the reaction Similar to cathepsin D, but slightly broader specificity.. Its function is as follows. May have a role in immune function. Probably involved in the processing of antigenic peptides during MHC class II-mediated antigen presentation. May play a role in activation-induced lymphocyte depletion in the thymus, and in neuronal degeneration and glial cell activation in the brain. The chain is Cathepsin E (Ctse) from Rattus norvegicus (Rat).